The chain runs to 212 residues: MIKSKFIVIEGLEGAGKTHACICVQRILKENNIKNVILVRQPGSTPVAEKIRKLIKNNTYIEDFEKETELLLMYAARIQLVKKIIQPALKKGTWVISDRHDLSSLAYQGGGLGIKRKLINKLKYLFLQDFIPDLTIYLDVYPEIGLKRASKRNHLDRIEHRSLTFFKKTRASYLKNIKLDKKIIKINANLNIKIVTQNIKNQILKWLQQKVV.

ATP is bound at residue 11–18; sequence GLEGAGKT.

It belongs to the thymidylate kinase family.

The catalysed reaction is dTMP + ATP = dTDP + ADP. In terms of biological role, phosphorylation of dTMP to form dTDP in both de novo and salvage pathways of dTTP synthesis. The protein is Thymidylate kinase of Buchnera aphidicola subsp. Schizaphis graminum (strain Sg).